The sequence spans 531 residues: Histone-arginine methyltransferase CARMER (531 aa).

The 310-residue stretch at 141 to 450 (ASQYFQFYGY…QSYDVTIDLH (310 aa)) folds into the SAM-dependent MTase PRMT-type domain. S-adenosyl-L-methionine is bound by residues Gln154, Arg163, Gly187, Glu209, Glu238, and Thr266. Arg501 carries the asymmetric dimethylarginine; by autocatalysis modification.

This sequence belongs to the class I-like SAM-binding methyltransferase superfamily. Protein arginine N-methyltransferase family. As to quaternary structure, homodimer. In terms of processing, the dimethylated protein is the major form.

It localises to the cytoplasm. It is found in the nucleus. The catalysed reaction is L-arginyl-[protein] + 2 S-adenosyl-L-methionine = N(omega),N(omega)-dimethyl-L-arginyl-[protein] + 2 S-adenosyl-L-homocysteine + 2 H(+). Methylates (mono- and asymmetric dimethylation) the guanidino nitrogens of arginyl residues in proteins. May methylate histone H3 at 'Arg-17' and activate transcription via chromatin remodeling. The sequence is that of Histone-arginine methyltransferase CARMER (Art4) from Drosophila ananassae (Fruit fly).